Reading from the N-terminus, the 347-residue chain is MIKRAITGIQASGRQHLGNFLGVMQGLKQLQSQYQLFLFVADLHAITVDFEPTMLKDNNLQLVKTLLALGLDYGKVNLFLQSDLMEHTMLGYLMLTQSNLGELQRMTQFKTKKLAQKRNSNNTITIPTGLLTYPVLMAADILLYQPDIVPVGNDQKQHLELTNDLAKRVAKKFKLKLKLPVFIENKDTNRIMDLSNPLKKMSKSNPDQNGVIYLDDSKETIIKKVRKATTDSFNKIRFAKKTQPGVTNLLVILTALLKEEVNHNLSKKIGSDLVKYYQNKSYLDLKNDLSSAVINVIESLKFKKAQITDEMVLKVLNDGKNQAKKVADETLKMFYKAFGLTSNQLFD.

ATP contacts are provided by residues 10-12 (QAS) and 18-19 (GN). The 'HIGH' region signature appears at 11–19 (ASGRQHLGN). Residue Asp140 participates in L-tryptophan binding. Residues 152-154 (GND), Ile191, and 200-204 (KMSKS) each bind ATP. The 'KMSKS' region motif lies at 200–204 (KMSKS).

Belongs to the class-I aminoacyl-tRNA synthetase family. As to quaternary structure, homodimer.

The protein localises to the cytoplasm. The catalysed reaction is tRNA(Trp) + L-tryptophan + ATP = L-tryptophyl-tRNA(Trp) + AMP + diphosphate + H(+). Functionally, catalyzes the attachment of tryptophan to tRNA(Trp). In Mycoplasma genitalium (strain ATCC 33530 / DSM 19775 / NCTC 10195 / G37) (Mycoplasmoides genitalium), this protein is Tryptophan--tRNA ligase.